Reading from the N-terminus, the 329-residue chain is Cytochrome f (329 aa).

The N-terminal stretch at Met-1–Ala-44 is a signal peptide. Tyr-45, Cys-65, Cys-68, and His-69 together coordinate heme. Residues Val-295–Lys-315 traverse the membrane as a helical segment.

This sequence belongs to the cytochrome f family. As to quaternary structure, the 4 large subunits of the cytochrome b6-f complex are cytochrome b6, subunit IV (17 kDa polypeptide, petD), cytochrome f and the Rieske protein, while the 4 small subunits are PetG, PetL, PetM and PetN. The complex functions as a dimer. Heme serves as cofactor.

It localises to the plastid. The protein resides in the chloroplast thylakoid membrane. Its function is as follows. Component of the cytochrome b6-f complex, which mediates electron transfer between photosystem II (PSII) and photosystem I (PSI), cyclic electron flow around PSI, and state transitions. The protein is Cytochrome f of Tupiella akineta (Green alga).